A 219-amino-acid chain; its full sequence is 2-hydroxy-3-keto-5-methylthiopentenyl-1-phosphate phosphatase (219 aa).

Belongs to the HAD-like hydrolase superfamily. MtnX family.

The catalysed reaction is 2-hydroxy-5-methylsulfanyl-3-oxopent-1-enyl phosphate + H2O = 1,2-dihydroxy-5-(methylsulfanyl)pent-1-en-3-one + phosphate. The protein operates within amino-acid biosynthesis; L-methionine biosynthesis via salvage pathway; L-methionine from S-methyl-5-thio-alpha-D-ribose 1-phosphate: step 4/6. In terms of biological role, dephosphorylates 2-hydroxy-3-keto-5-methylthiopentenyl-1-phosphate (HK-MTPenyl-1-P) yielding 1,2-dihydroxy-3-keto-5-methylthiopentene (DHK-MTPene). The sequence is that of 2-hydroxy-3-keto-5-methylthiopentenyl-1-phosphate phosphatase from Bacillus mycoides (strain KBAB4) (Bacillus weihenstephanensis).